The primary structure comprises 434 residues: UDP-glucuronate 4-epimerase 2 (434 aa).

2 helical membrane-spanning segments follow: residues 32 to 52 (SVAK…IFFY) and 91 to 111 (GVSV…SAAL). 93 to 124 (SVLVTGAAGFVGTHVSAALKRRGDGVLGLDNF) provides a ligand contact to NAD(+). Tyr-243 functions as the Proton acceptor in the catalytic mechanism.

Belongs to the NAD(P)-dependent epimerase/dehydratase family. In terms of assembly, homodimer. In terms of tissue distribution, in roots, leaves, siliques, flowers, pollen and stems.

Its subcellular location is the golgi apparatus. It localises to the golgi stack membrane. It carries out the reaction UDP-alpha-D-glucuronate = UDP-alpha-D-galacturonate. Functionally, involved in the synthesis of the negatively charged monosaccharide that forms the backbone of pectic cell wall components. This is UDP-glucuronate 4-epimerase 2 (GAE2) from Arabidopsis thaliana (Mouse-ear cress).